A 409-amino-acid polypeptide reads, in one-letter code: Elongation factor Tu, chloroplastic (409 aa).

Residues 10–214 (KPHVNIGTIG…AVDEYIPTPE (205 aa)) enclose the tr-type G domain. The G1 stretch occupies residues 19–26 (GHVDHGKT). 19–26 (GHVDHGKT) is a GTP binding site. Position 26 (Thr26) interacts with Mg(2+). The G2 stretch occupies residues 60–64 (GITIN). The G3 stretch occupies residues 81-84 (DCPG). GTP contacts are provided by residues 81–85 (DCPGH) and 136–139 (NKED). Residues 136–139 (NKED) form a G4 region. Residues 174–176 (SAL) form a G5 region.

Belongs to the TRAFAC class translation factor GTPase superfamily. Classic translation factor GTPase family. EF-Tu/EF-1A subfamily.

Its subcellular location is the plastid. The protein localises to the chloroplast. It catalyses the reaction GTP + H2O = GDP + phosphate + H(+). In terms of biological role, GTP hydrolase that promotes the GTP-dependent binding of aminoacyl-tRNA to the A-site of ribosomes during protein biosynthesis. This is Elongation factor Tu, chloroplastic (tufA) from Phaeodactylum tricornutum (strain CCAP 1055/1).